The sequence spans 210 residues: Outer-membrane lipoprotein carrier protein (210 aa).

A signal peptide spans 1–26 (MHMIRRAAGALAVFAVAALAAAPAWA).

The protein belongs to the LolA family. Monomer.

Its subcellular location is the periplasm. Participates in the translocation of lipoproteins from the inner membrane to the outer membrane. Only forms a complex with a lipoprotein if the residue after the N-terminal Cys is not an aspartate (The Asp acts as a targeting signal to indicate that the lipoprotein should stay in the inner membrane). This Bordetella bronchiseptica (strain ATCC BAA-588 / NCTC 13252 / RB50) (Alcaligenes bronchisepticus) protein is Outer-membrane lipoprotein carrier protein.